Consider the following 221-residue polypeptide: Probable septum site-determining protein MinC (221 aa).

This sequence belongs to the MinC family. Interacts with MinD and FtsZ.

In terms of biological role, cell division inhibitor that blocks the formation of polar Z ring septums. Rapidly oscillates between the poles of the cell to destabilize FtsZ filaments that have formed before they mature into polar Z rings. Prevents FtsZ polymerization. The sequence is that of Probable septum site-determining protein MinC from Shewanella denitrificans (strain OS217 / ATCC BAA-1090 / DSM 15013).